Consider the following 158-residue polypeptide: MKADRNLRLCDVVLDETIGRSTPDVEHERAVAIFDLLEENLFEPVGHPGGPYRLNLSLVDAKLVFRISTDGGTEVATHILSLTPFRRIVKDYFMICESYYQAIRSATPSQIEAIDMGRRGIHNEGSQTLMDRLSGKIRLDFDTARRLFTLVCVLYWRG.

Belongs to the UPF0262 family.

This is UPF0262 protein R00612 from Rhizobium meliloti (strain 1021) (Ensifer meliloti).